Consider the following 713-residue polypeptide: Low-density lipoprotein receptor-related protein 10 (713 aa).

Residues 1–17 (MLSALPLLFLLLGGALA) form the signal peptide. At 18–441 (RPDRITFPRS…WDCSYALPRK (424 aa)) the chain is on the extracellular side. 2 cysteine pairs are disulfide-bonded: cysteine 29/cysteine 58 and cysteine 81/cysteine 99. A CUB 1 domain is found at 29–137 (CEAPPAVLSE…QGFLLTYSQD (109 aa)). Asparagine 57 carries N-linked (GlcNAc...) asparagine glycosylation. The N-linked (GlcNAc...) asparagine glycan is linked to asparagine 112. Residues 140-176 (LCLQEEFQCLNHRCIPAAQRCDGIDACGDGSDEAGCS) enclose the LDL-receptor class A 1 domain. Intrachain disulfides connect cysteine 141/cysteine 153, cysteine 148/cysteine 166, cysteine 160/cysteine 175, and cysteine 193/cysteine 221. The region spanning 193–306 (CNLTLEDFYG…RGFNATYHVR (114 aa)) is the CUB 2 domain. Asparagine 194 and asparagine 300 each carry an N-linked (GlcNAc...) asparagine glycan. LDL-receptor class A domains are found at residues 308-355 (YCLP…EGCP), 356-398 (GCPP…RRCR), and 399-435 (HCQPGNFRCRDEKCVYETWVCDGQPDCTDGSDEWDCS). Cystine bridges form between cysteine 309-cysteine 332, cysteine 316-cysteine 345, cysteine 339-cysteine 354, cysteine 357-cysteine 375, cysteine 364-cysteine 388, cysteine 382-cysteine 397, cysteine 400-cysteine 412, cysteine 407-cysteine 425, and cysteine 419-cysteine 434. The helical transmembrane segment at 442-462 (VITAAVIGSLVCGLLLVIALG) threads the bilayer. Residues 463 to 713 (CTCKLYAIRT…VEAEDEPLLA (251 aa)) lie on the Cytoplasmic side of the membrane. The segment at 566–636 (LLPRTNTPAR…TLPALATVSE (71 aa)) is disordered. Residue threonine 596 is modified to Phosphothreonine. Pro residues predominate over residues 614-626 (PPLPIKTPIPTPS).

It belongs to the LDLR family. In terms of tissue distribution, highly expressed in heart, lung, liver and liver. Expressed at low level in brain and spleen. Weakly or not expressed in testis and skeletal muscle. In liver, it is expressed in hepatocytes and at higher level in sinusoidal lining. In the kidney, it is expressed in peritubular capillaries. In brain, it is expressed in the epithelium of the choroid plexus ependymal cells of the third ventricle pia matter, and to lesser extent in hippocampal fields CA2 and CA3.

It localises to the membrane. The protein resides in the coated pit. Probable receptor, which is involved in the internalization of lipophilic molecules and/or signal transduction. May be involved in the uptake of lipoprotein APOE in liver. In Mus musculus (Mouse), this protein is Low-density lipoprotein receptor-related protein 10 (Lrp10).